The primary structure comprises 129 residues: Flagellar assembly factor FliW (129 aa).

This sequence belongs to the FliW family. In terms of assembly, interacts with flagellins FlaA and FlaB but not with FlaC; recognizes glycosylated and non-glycosylated FlaA equally. Interacts with CsrA. May form a 3-way complex of flagellin, FliS and FliW simultaneously in which FliS and FliW do not directly interact.

The protein resides in the cytoplasm. Functionally, acts as an anti-CsrA protein, binds CsrA and prevents it from repressing translation of its target genes, one of which is flagellin. Binds to flagellin and participates in the assembly of the flagellum. Overexpression leads to increased levels of FlaA and FlaB, but levels of FlaC remain stable. Involved in post-transcriptional regulation of flagellin biosynthesis. The protein is Flagellar assembly factor FliW of Campylobacter jejuni subsp. jejuni serotype O:6 (strain 81116 / NCTC 11828).